Consider the following 177-residue polypeptide: Large ribosomal subunit protein uL6 (177 aa).

It belongs to the universal ribosomal protein uL6 family. As to quaternary structure, part of the 50S ribosomal subunit.

In terms of biological role, this protein binds to the 23S rRNA, and is important in its secondary structure. It is located near the subunit interface in the base of the L7/L12 stalk, and near the tRNA binding site of the peptidyltransferase center. In Vibrio cholerae serotype O1 (strain ATCC 39541 / Classical Ogawa 395 / O395), this protein is Large ribosomal subunit protein uL6.